Reading from the N-terminus, the 574-residue chain is K(+)/H(+) antiporter NhaP2 (574 aa).

13 helical membrane-spanning segments follow: residues 6-26 (INSF…LSPV), 34-54 (ILLI…GGIL), 58-78 (YSTA…DGGM), 87-107 (VALW…TSIT), 109-129 (VMAA…GAIV), 173-193 (IAIL…ISFI), 196-216 (FGLG…LVNL), 219-239 (LAEG…YAAS), 242-262 (LGGS…NKPT), 271-291 (VLDG…GLLL), 299-319 (IWLP…PLAV), 335-355 (WFIS…VFPM), and 359-379 (LPGA…SLLV). The RCK C-terminal domain occupies 405 to 486 (SGVEIYPSSE…LEALSNLFSQ (82 aa)).

This sequence belongs to the monovalent cation:proton antiporter 1 (CPA1) transporter (TC 2.A.36) family. NhaP2 subfamily.

It localises to the cell inner membrane. The enzyme catalyses K(+)(in) + H(+)(out) = K(+)(out) + H(+)(in). In terms of biological role, k(+)/H(+) antiporter that extrudes potassium in exchange for external protons and maintains the internal concentration of potassium under toxic levels. This chain is K(+)/H(+) antiporter NhaP2, found in Shewanella sp. (strain MR-7).